A 259-amino-acid chain; its full sequence is Deoxyribose-phosphate aldolase (259 aa).

Catalysis depends on Asp101, which acts as the Proton donor/acceptor. Lys166 functions as the Schiff-base intermediate with acetaldehyde in the catalytic mechanism. Lys200 functions as the Proton donor/acceptor in the catalytic mechanism.

Belongs to the DeoC/FbaB aldolase family. DeoC type 2 subfamily.

The protein localises to the cytoplasm. It carries out the reaction 2-deoxy-D-ribose 5-phosphate = D-glyceraldehyde 3-phosphate + acetaldehyde. It participates in carbohydrate degradation; 2-deoxy-D-ribose 1-phosphate degradation; D-glyceraldehyde 3-phosphate and acetaldehyde from 2-deoxy-alpha-D-ribose 1-phosphate: step 2/2. Catalyzes a reversible aldol reaction between acetaldehyde and D-glyceraldehyde 3-phosphate to generate 2-deoxy-D-ribose 5-phosphate. This Glaesserella parasuis serovar 5 (strain SH0165) (Haemophilus parasuis) protein is Deoxyribose-phosphate aldolase.